We begin with the raw amino-acid sequence, 1030 residues long: MENREPKLKQAPYFRCEKGPNWVPVCQKCEACVLAWKIFATKEWFRRVNDISQRRFLVSILGQLNSLYLLQYFQNILETTQGKDFIYNRSRIKLSRKGGKEEEVVKSSLNQMLDKTVERKMKEILYWFGNSTHRTKANYTLLLLQMCDSNLLLTAANVIRVLFMKEWNSISGLHDDTPDVMFFPEKKYSGTQDTSYVSWAARPKPVSFPMSKHLGNKLGTENVDRETTEGKGESSLQCIHEMNRQIFGKGGMSRLGDDPCNLLLSLDHVQLLSSGYSKYRDFIRDLPLHLSKYILRMLDKHSLNRCIFVSQHWATLAQQVKVDQSMHSFIQNQISLLQVTKEEKQAYTGSYTRGIDPNYANKVSIPVPKIVDDGKRSRSKNQKWKLRTKTDYNLWNAYQNQETQLVQMEERNVFCGTYNIRVLSDTFDQNRIIHYNGGDLMAISSNRKIHLLDIMQTKELPIEFRGHAGSVRALFLSEEDNILLSGSYDLSIRYWDVKTGACVRIFYGHQGTITCLDVYKNRLVSGAKDGQVKEWDIETGKCLKTFKHKDPILAAKISETYIVSSCERGIVKVWHVVTAQLQKTLTGHEGAVKCLFFNEWHLVSGGADGLVMAWSMVGKYERCLMAFKHPKEVLQVSLLYLRVISACGDGKIRIYNFLNGNCLKVIKVDARGDPVLSFFYQGNRMVAHTDSNILVFQFENVKWQYSSDKNKVKKSKDKEEEREETSLGDEHSRSTIQGHSLKDSVSSKQEFSKSRVHLKQTKNLSSDDMETPVGEVSHPLQKLWKVPMTPDRFLLTISALQQAHNSEEFAYPHRPRPQVIDAWGPSIPYPRKVLSLKGKSVQHAVDQLRSSNLPTGVRQTNIPLEIQKLQPNLKKSLHSPRVQATVPQPSLIRPKVSDSLRGDEHLTSSIDGTMRRAGPLTSMQVIKPNRMLAPRGGTATLSPKKERPRFYTTLDPLRMNTGFMLMTVKEEKEFAEAKMKEYEASVSTKEVDPGKASKAAWIRKIKGLPIDNFMKEGKTAAPELGQNVFI.

The region spanning 280–329 is the F-box domain; that stretch reads RDFIRDLPLHLSKYILRMLDKHSLNRCIFVSQHWATLAQQVKVDQSMHSF. WD repeat units lie at residues 466-505, 508-547, 549-584, 587-624, and 626-667; these read GHAG…CVRI, GHQG…KTFK, KDPI…LQKT, GHEG…ERCL, and AFKH…KVIK. A disordered region spans residues 709 to 773; that stretch reads KNKVKKSKDK…LSSDDMETPV (65 aa). Residues 716 to 733 show a composition bias toward basic and acidic residues; the sequence is KDKEEEREETSLGDEHSR. Polar residues predominate over residues 734–749; that stretch reads STIQGHSLKDSVSSKQ. Positions 963-992 form a coiled coil; that stretch reads FMLMTVKEEKEFAEAKMKEYEASVSTKEVD.

Functionally, probable substrate-recognition component of a SCF (SKP1-CUL1-F-box protein)-type E3 ubiquitin ligase complex which mediates the ubiquitination and subsequent proteasomal degradation of target proteins. Overexpression is leading to degradation of CBX5 and CBX1. The sequence is that of F-box/WD repeat-containing protein 10 (Fbxw10) from Mus musculus (Mouse).